The sequence spans 513 residues: ATP synthase subunit alpha (513 aa).

169–176 provides a ligand contact to ATP; that stretch reads GDRQCGKT.

The protein belongs to the ATPase alpha/beta chains family. As to quaternary structure, F-type ATPases have 2 components, CF(1) - the catalytic core - and CF(0) - the membrane proton channel. CF(1) has five subunits: alpha(3), beta(3), gamma(1), delta(1), epsilon(1). CF(0) has three main subunits: a(1), b(2) and c(9-12). The alpha and beta chains form an alternating ring which encloses part of the gamma chain. CF(1) is attached to CF(0) by a central stalk formed by the gamma and epsilon chains, while a peripheral stalk is formed by the delta and b chains.

Its subcellular location is the cell inner membrane. It carries out the reaction ATP + H2O + 4 H(+)(in) = ADP + phosphate + 5 H(+)(out). Its function is as follows. Produces ATP from ADP in the presence of a proton gradient across the membrane. The alpha chain is a regulatory subunit. The sequence is that of ATP synthase subunit alpha from Burkholderia ambifaria (strain MC40-6).